The chain runs to 345 residues: MKKVVLLTCTIIVGGQWGDEGKGKIISYICDKDKPSIIARGGVGPNAGHTVNIGGKSYGIRMIPTGFPYKEAKLAIGAGVLVDPEVLLKEVEMLKDFNVKERLIVDYRCGIIEEKHKIMDRKDEHLAKEIGTTGSGCGPANVDRVLRILKQAKDIEELKEFLGDVSEEVNNALDRGENVLIEGTQGTLLSLYYGTYPYVTSKDTTASSFAADVGIGPTKVDEVIVVFKTFPTRVGAGPFPTEMSLEEAESLGIVEYGTVTGRRRRVGYFDFELARKACRLNGATQIALTGLDKYDKECYGVTEYNKLSEKAKEFINKIEEVTGVPVTIISTGPEMHQTIDLRNEL.

GTP contacts are provided by residues 18-24 (GDEGKGK) and 48-50 (GHT). The active-site Proton acceptor is the aspartate 19. Mg(2+) contacts are provided by aspartate 19 and glycine 48. Residues 19–22 (DEGK), 46–49 (NAGH), threonine 133, arginine 147, glutamine 185, threonine 200, and arginine 262 contribute to the IMP site. Histidine 49 (proton donor) is an active-site residue. Residue 258-264 (TVTGRRR) coordinates substrate. GTP-binding positions include arginine 264, 290–292 (GLD), and 330–332 (STG).

The protein belongs to the adenylosuccinate synthetase family. In terms of assembly, homodimer. The cofactor is Mg(2+).

It localises to the cytoplasm. The enzyme catalyses IMP + L-aspartate + GTP = N(6)-(1,2-dicarboxyethyl)-AMP + GDP + phosphate + 2 H(+). It functions in the pathway purine metabolism; AMP biosynthesis via de novo pathway; AMP from IMP: step 1/2. Plays an important role in the de novo pathway of purine nucleotide biosynthesis. Catalyzes the first committed step in the biosynthesis of AMP from IMP. This is Adenylosuccinate synthetase from Methanocaldococcus jannaschii (strain ATCC 43067 / DSM 2661 / JAL-1 / JCM 10045 / NBRC 100440) (Methanococcus jannaschii).